The following is a 430-amino-acid chain: Tol-Pal system protein TolB (430 aa).

Residues 1 to 21 form the signal peptide; that stretch reads MKQALRVAFGFLMLWAAVLHA.

It belongs to the TolB family. In terms of assembly, the Tol-Pal system is composed of five core proteins: the inner membrane proteins TolA, TolQ and TolR, the periplasmic protein TolB and the outer membrane protein Pal. They form a network linking the inner and outer membranes and the peptidoglycan layer.

The protein resides in the periplasm. In terms of biological role, part of the Tol-Pal system, which plays a role in outer membrane invagination during cell division and is important for maintaining outer membrane integrity. TolB occupies a key intermediary position in the Tol-Pal system because it communicates directly with both membrane-embedded components, Pal in the outer membrane and TolA in the inner membrane. This Salmonella choleraesuis (strain SC-B67) protein is Tol-Pal system protein TolB.